A 632-amino-acid polypeptide reads, in one-letter code: X-ray repair cross-complementing protein 5 (632 aa).

The active-site Schiff-base intermediate with DNA; for 5'-deoxyribose-5-phosphate lyase activity is Arg-52. The Ku domain maps to Leu-283 to Lys-490. The segment at Asp-555–Lys-578 is disordered. An SAP domain is found at Leu-595 to Phe-629.

This sequence belongs to the ku70 family. In terms of assembly, heterodimer composed of XRCC5/Ku80 and XRCC6/Ku70. Component of the core long-range non-homologous end joining (NHEJ) complex (also named DNA-PK complex) composed of PRKDC, LIG4, XRCC4, XRCC6/Ku70, XRCC5/Ku86 and NHEJ1/XLF. Additional component of the NHEJ complex includes PAXX. Following autophosphorylation, PRKDC dissociates from DNA, leading to formation of the short-range NHEJ complex, composed of LIG4, XRCC4, XRCC6/Ku70, XRCC5/Ku86 and NHEJ1/XLF. Phosphorylated on serine residues.

Its subcellular location is the nucleus. The protein resides in the chromosome. In terms of biological role, single-stranded DNA-dependent ATP-dependent helicase that plays a key role in DNA non-homologous end joining (NHEJ) by recruiting DNA-PK to DNA. Required for double-strand break repair and V(D)J recombination. Also has a role in chromosome translocation. Has a role in chromosome translocation. The DNA helicase II complex binds preferentially to fork-like ends of double-stranded DNA in a cell cycle-dependent manner. It works in the 3'-5' direction. During NHEJ, the XRCC5-XRRC6 dimer performs the recognition step: it recognizes and binds to the broken ends of the DNA and protects them from further resection. Binding to DNA may be mediated by XRCC6. The XRCC5-XRRC6 dimer acts as a regulatory subunit of the DNA-dependent protein kinase complex DNA-PK by increasing the affinity of the catalytic subunit PRKDC to DNA by 100-fold. The XRCC5-XRRC6 dimer is probably involved in stabilizing broken DNA ends and bringing them together. The assembly of the DNA-PK complex to DNA ends is required for the NHEJ ligation step. Probably also acts as a 5'-deoxyribose-5-phosphate lyase (5'-dRP lyase), by catalyzing the beta-elimination of the 5' deoxyribose-5-phosphate at an abasic site near double-strand breaks. 5'-dRP lyase activity allows to 'clean' the termini of abasic sites, a class of nucleotide damage commonly associated with strand breaks, before such broken ends can be joined. The XRCC5-XRRC6 dimer together with APEX1 acts as a negative regulator of transcription. The protein is X-ray repair cross-complementing protein 5 (XRCC6) of Gallus gallus (Chicken).